A 1923-amino-acid polypeptide reads, in one-letter code: MAQSSTSHDSGPQGLMRRPSRSAATTVSIEVFDHEVVPASLGTIAPILRVAAEIEHERPRVAYLCRFYAFEKAHRLDPSSGGRGVRQFKTLLFQRLERDNASSLASRVKKTDGREVESFYQQYYEHYVRALDQGDQADRAQLGKAYQTAGVLFEVLMAVNKSEKVEAVAPEIIAAARDVQEKNEIYAPYNILPLDSAGASQSVMQLEEVKAAVAALGNTRGLNWPSGFEQHRKKTGNLDLLDWLRAMFGFQRDNVRNQREHLVCLFADNHIRLTPKPEPLNKLDDRAVDTVMSKLFKNYKNWCKFLGRKHSLRLPQAAQDIQQRKILYMGLYLLIWGEAANIRFMPECLCYIFHNMAYELHGLLAGNVSIVTGENIKPSYGGDDEAFLRKVITPIYRVVQTEANKNANGKAAHSDWSNYDDLNEYFWTPDCFSLGWPMRDDGDLFKSTRDTTQGKKGSFRKAGRTGKSNFTETRTFWHIYHSFDRLWTFYLLALQAMIILAFERVELREILRKDVLYALSSIFITAAFLRFLQSVLDVILNFPGFHRWKFTDVLRNILKIVVSLAWCVVLPLCYAQSVSFAPGKLKQWLSFLPQVKGVPPLYIMAVALYLLPNVLAAIMFIFPMLRRWIENSDWHIFRLLLWWSQPRIYVGRGMHESQIALIKYTIFWLLLFCCKFAFSYFLQVKLLVKPTNAIMSIRHVKYKWHEFFPNAEHNYGAVVSLWLPVILVYFMDTQIWYAIFSTICGGVIGAFDRLGEIRTLGMLRSRFQSLPGAFNTYLVPSDKTRRRGFSLSKRFAEVTAARRTEAAKFSQLWNEIISSFREEDLISDREMDLLLVPYTSDPSLKLIQWPPFLLASKIPIALDMAAQFRTRDSDLWKRICADEYMKCAVIECYESFKHVLHTLVIGENEKRIIGIIIKEVESNISKNSFLSNFRMAPLPALCSKFVELVGILKNADPAKRDTVVLLLQDMLEVVTRDMMQNENRELVELGHTNKESGRQLFAGTDAKPAILFPPVATAQWHEQISRLHLLLTVKESAMDVPTNLEAQRRIAFFTNSLFMDMPRAPRVRNMLSFSVLTPYYSEETVYSKNDLEMENEDGVSVVYYLQKIFPDEWTNFLERLDCKDETSVLESEENILQLRHWVSLRGQTLFRTVRGMMYYRRALKLQAFLDMANETEILAGYKAISEPTEEDKKSQRSLYTQLEAVADLKFTYVATCQNYGNQKRSGDRRATDILNLMVNNPSLRVAYIDEVEEREGGKVQKVFYSVLIKAVDNLDQEIYRIKLPGPAKIGEGKPENQNHALIFTRGEALQAIDMNQDHYLEEALKMRNLLEEFNEDHGVRAPTILGFREHIFTGSVSSLAWFMSNQETSFVTIGQRVLASPLKVRFHYGHPDVFDRIFHITRGGISKASRGINLSEDIFAGFNSTLRRGNVTHHEYIQVGKGRDVGLNQISLFEAKVACGNGEQTLSRDLYRLGHRFDFFRMMSCYFTTVGFYISSMIVVLTVYAFLYGRLYLSLSGVEEAIVKFAAAKGDSSLKAAMASQSVVQLGLLMTLPMVMEIGLERGFRTALSDLIIMQLQLAPVFFTFSLGTKVHYYGRTILHGGSKYRATGRGFVVKHEKFAENYRMYSRSHFVKGMELMVLLICYRIYGKAAEDSVGYALVMGSTWFLVGSWLFAPFFFNPSGFEWQKIVDDWDDWNKWISSRGGIGVPANKSWESWWEEEQEHLLHSGFFGKFWEIFLSLRYFIYQYGIVYQLNLTKESRMGKQHSIIVYGLSWLVIVAVMIVLKIVSMGRKKFSADFQLMFRLLKLFLFIGSVVIVGMLFHFLKLTVGDIMQSLLAFLPTGWALLQISQVARPLMKTVGMWGSVKALARGYEYIMGVVIFMPVTVLAWFPFVSEFQTRLLFNQAFSRGLQIQRILAGGKKQK.

The span at 1–10 shows a compositional bias: polar residues; that stretch reads MAQSSTSHDS. A disordered region spans residues 1 to 22; that stretch reads MAQSSTSHDSGPQGLMRRPSRS. Over 1–481 the chain is Cytoplasmic; that stretch reads MAQSSTSHDS…ETRTFWHIYH (481 aa). Residues 482-502 form a helical membrane-spanning segment; sequence SFDRLWTFYLLALQAMIILAF. At 503–521 the chain is on the extracellular side; the sequence is ERVELREILRKDVLYALSS. A helical transmembrane segment spans residues 522 to 542; that stretch reads IFITAAFLRFLQSVLDVILNF. The Cytoplasmic portion of the chain corresponds to 543–559; the sequence is PGFHRWKFTDVLRNILK. Residues 560 to 580 traverse the membrane as a helical segment; sequence IVVSLAWCVVLPLCYAQSVSF. Over 581 to 601 the chain is Extracellular; the sequence is APGKLKQWLSFLPQVKGVPPL. The helical transmembrane segment at 602–622 threads the bilayer; that stretch reads YIMAVALYLLPNVLAAIMFIF. Residues 623–658 lie on the Cytoplasmic side of the membrane; the sequence is PMLRRWIENSDWHIFRLLLWWSQPRIYVGRGMHESQ. The helical transmembrane segment at 659 to 679 threads the bilayer; sequence IALIKYTIFWLLLFCCKFAFS. Topologically, residues 680-719 are extracellular; the sequence is YFLQVKLLVKPTNAIMSIRHVKYKWHEFFPNAEHNYGAVV. A helical membrane pass occupies residues 720 to 740; sequence SLWLPVILVYFMDTQIWYAIF. Over 741-1486 the chain is Cytoplasmic; sequence STICGGVIGA…FDFFRMMSCY (746 aa). The helical transmembrane segment at 1487–1507 threads the bilayer; sequence FTTVGFYISSMIVVLTVYAFL. Residues 1508–1535 lie on the Extracellular side of the membrane; the sequence is YGRLYLSLSGVEEAIVKFAAAKGDSSLK. A helical transmembrane segment spans residues 1536 to 1556; that stretch reads AAMASQSVVQLGLLMTLPMVM. Over 1557–1566 the chain is Cytoplasmic; that stretch reads EIGLERGFRT. The chain crosses the membrane as a helical span at residues 1567 to 1587; it reads ALSDLIIMQLQLAPVFFTFSL. At 1588–1630 the chain is on the extracellular side; the sequence is GTKVHYYGRTILHGGSKYRATGRGFVVKHEKFAENYRMYSRSH. Residues 1631–1651 traverse the membrane as a helical segment; the sequence is FVKGMELMVLLICYRIYGKAA. Residues 1652–1657 lie on the Cytoplasmic side of the membrane; that stretch reads EDSVGY. The helical transmembrane segment at 1658-1678 threads the bilayer; sequence ALVMGSTWFLVGSWLFAPFFF. The Extracellular portion of the chain corresponds to 1679–1732; that stretch reads NPSGFEWQKIVDDWDDWNKWISSRGGIGVPANKSWESWWEEEQEHLLHSGFFGK. Residue Asn1710 is glycosylated (N-linked (GlcNAc...) asparagine). The helical transmembrane segment at 1733 to 1755 threads the bilayer; sequence FWEIFLSLRYFIYQYGIVYQLNL. The Cytoplasmic portion of the chain corresponds to 1756 to 1766; it reads TKESRMGKQHS. Residues 1767-1787 form a helical membrane-spanning segment; that stretch reads IIVYGLSWLVIVAVMIVLKIV. The Extracellular segment spans residues 1788–1803; the sequence is SMGRKKFSADFQLMFR. A helical membrane pass occupies residues 1804–1824; that stretch reads LLKLFLFIGSVVIVGMLFHFL. A topological domain (cytoplasmic) is located at residue Lys1825. The helical transmembrane segment at 1826 to 1846 threads the bilayer; that stretch reads LTVGDIMQSLLAFLPTGWALL. The Extracellular portion of the chain corresponds to 1847 to 1873; sequence QISQVARPLMKTVGMWGSVKALARGYE. The helical transmembrane segment at 1874–1894 threads the bilayer; sequence YIMGVVIFMPVTVLAWFPFVS. Over 1895 to 1923 the chain is Cytoplasmic; the sequence is EFQTRLLFNQAFSRGLQIQRILAGGKKQK.

It belongs to the glycosyltransferase 48 family.

The protein resides in the cell membrane. The enzyme catalyses [(1-&gt;3)-beta-D-glucosyl](n) + UDP-alpha-D-glucose = [(1-&gt;3)-beta-D-glucosyl](n+1) + UDP + H(+). Functionally, required for the formation of the callose wall separating the tetraspores (interstitial wall) and surrounding the pollen mother cells (peripheral wall). Required for exine formation on pollen wall. May be involved in callose synthesis during pollen tube growth. During plant growth and development, callose is found as a transitory component of the cell plate in dividing cells, is a major component of pollen mother cell walls and pollen tubes, and is found as a structural component of plasmodesmatal canals. The protein is Callose synthase 5 (CALS5) of Arabidopsis thaliana (Mouse-ear cress).